Here is a 107-residue protein sequence, read N- to C-terminus: Phosphoribosyl-ATP pyrophosphatase (107 aa).

It belongs to the PRA-PH family.

It is found in the cytoplasm. It carries out the reaction 1-(5-phospho-beta-D-ribosyl)-ATP + H2O = 1-(5-phospho-beta-D-ribosyl)-5'-AMP + diphosphate + H(+). The protein operates within amino-acid biosynthesis; L-histidine biosynthesis; L-histidine from 5-phospho-alpha-D-ribose 1-diphosphate: step 2/9. The polypeptide is Phosphoribosyl-ATP pyrophosphatase (Sinorhizobium fredii (strain NBRC 101917 / NGR234)).